The primary structure comprises 208 residues: Regulator of Ty1 transposition protein 105 (208 aa).

Residues 28–105 form a disordered region; the sequence is GVSFDRSLTP…QRADQRSRLE (78 aa). The span at 33–42 shows a compositional bias: polar residues; it reads RSLTPQSLRT. A compositionally biased stretch (low complexity) spans 60-71; it reads IDTSPSVVSDII. A compositionally biased stretch (basic and acidic residues) spans 94 to 105; sequence ERQRADQRSRLE.

It is found in the cytoplasm. Its subcellular location is the nucleus. Involved in regulation of Ty1 transposition. Inhibits Ty1 transposition at a post-transcriptional and pre-integrational stage of the Ty1 retrotransposition cycle. The sequence is that of Regulator of Ty1 transposition protein 105 (RTT105) from Saccharomyces cerevisiae (strain YJM789) (Baker's yeast).